The primary structure comprises 343 residues: 4-hydroxy-2-oxovalerate aldolase 4 (343 aa).

The Pyruvate carboxyltransferase domain maps to 8-260; sequence VTVHDMTLRD…ETGVDVAKIT (253 aa). 16 to 17 is a binding site for substrate; it reads RD. Residue D17 participates in Mn(2+) binding. H20 acts as the Proton acceptor in catalysis. Substrate contacts are provided by S170 and H199. Mn(2+) is bound by residues H199 and H201. Y290 contacts substrate.

This sequence belongs to the 4-hydroxy-2-oxovalerate aldolase family.

It carries out the reaction (S)-4-hydroxy-2-oxopentanoate = acetaldehyde + pyruvate. This is 4-hydroxy-2-oxovalerate aldolase 4 from Dechloromonas aromatica (strain RCB).